A 381-amino-acid chain; its full sequence is Class E basic helix-loop-helix protein 22 (381 aa).

Disordered stretches follow at residues 30–94 (RLEA…GGGG), 135–154 (RGSV…DSDG), and 188–242 (HLHG…EQKA). Residues 82-94 (GGGGGSAGSGGGG) show a composition bias toward gly residues. Residues 198-225 (GGLGGGGGGGSSSGSSGGGGGSGSGSGG) are compositionally biased toward gly residues. The 55-residue stretch at 242–296 (ALRLNINARERRRMHDLNDALDELRAVIPYAHSPSVRKLSKIATLLLAKNYILMQ) folds into the bHLH domain.

In terms of assembly, interacts with PRDM8. In terms of tissue distribution, brain-specific, with the highest expression in the cerebellum.

It is found in the nucleus. In terms of biological role, inhibits DNA binding of TCF3/E47 homodimers and TCF3 (E47)/NEUROD1 heterodimers and acts as a strong repressor of Neurod1 and Myod-responsive genes, probably by heterodimerization with class a basic helix-loop-helix factors. Despite the presence of an intact basic domain, does not bind to DNA. In the brain, may function as an area-specific transcription factor that regulates the postmitotic acquisition of area identities and elucidate the genetic hierarchy between progenitors and postmitotic neurons driving neocortical arealization. May be required for the survival of a specific population of inhibitory neurons in the superficial laminae of the spinal cord dorsal horn that may regulate pruritis. Seems to play a crucial role in the retinogenesis, in the specification of amacrine and bipolar subtypes. Forms with PRDM8 a transcriptional repressor complex controlling genes involved in neural development and neuronal differentiation. The chain is Class E basic helix-loop-helix protein 22 (BHLHE22) from Homo sapiens (Human).